The chain runs to 390 residues: Ribosomal RNA small subunit methyltransferase H (390 aa).

S-adenosyl-L-methionine contacts are provided by residues 47–49, Asp66, Phe93, Asp122, and Gln129; that span reads GGH. Residues 282–390 are disordered; the sequence is SKTPPGLPID…SHREDVEGEQ (109 aa). A compositionally biased stretch (basic and acidic residues) spans 305-316; the sequence is GSEKADEQENNK. Polar residues predominate over residues 348-358; that stretch reads SGSSTTYSARS. 2 stretches are compositionally biased toward basic and acidic residues: residues 360–372 and 381–390; these read SRHE…REHL and SHREDVEGEQ.

Belongs to the methyltransferase superfamily. RsmH family.

It localises to the cytoplasm. It catalyses the reaction cytidine(1402) in 16S rRNA + S-adenosyl-L-methionine = N(4)-methylcytidine(1402) in 16S rRNA + S-adenosyl-L-homocysteine + H(+). In terms of biological role, specifically methylates the N4 position of cytidine in position 1402 (C1402) of 16S rRNA. In Corynebacterium kroppenstedtii (strain DSM 44385 / JCM 11950 / CIP 105744 / CCUG 35717), this protein is Ribosomal RNA small subunit methyltransferase H.